The following is a 438-amino-acid chain: Protein maelstrom 1 (438 aa).

Positions 2–69 (APKKRNGFMT…LERTAKKERL (68 aa)) form a DNA-binding region, HMG box. Residues 374-438 (KEMGSRDLSP…NMGAGKKIAR (65 aa)) are disordered. Residues 381–391 (LSPSSSHQSVS) are compositionally biased toward polar residues.

The protein belongs to the maelstrom family.

The protein localises to the cytoplasm. It is found in the nucleus. Involved both in the piRNA and miRNA metabolic processes. As a component of the meiotic nuage, plays a central role during oogenesis by repressing transposable elements and preventing their mobilization, which is essential for the germline integrity. Repression of transposable elements is mediated via the piRNA metabolic process, which mediates the repression of transposable elements during meiosis by forming complexes composed of piRNAs and Piwi proteins and governs the repression of transposons. As a nuclear component, it is required for proper differentiation in the germline stem cell (GSC) lineage by repressing microRNA-7 (miR-7), thereby acting as an indirect regulator of bag-of-marbles (Bam). Acts by binding to the promoter of miR-7 gene and repressing its expression; miR-7 repression alleviates the Bam repression by miR-7, thereby allowing differentiation in the germline stem cell (GSC) lineage. This Drosophila persimilis (Fruit fly) protein is Protein maelstrom 1 (mael1).